The following is a 207-amino-acid chain: Guanylate kinase (207 aa).

The region spanning 4–184 (GTLYIVSAPS…ALSDLKTIIR (181 aa)) is the Guanylate kinase-like domain. 11–18 (APSGAGKS) contributes to the ATP binding site.

This sequence belongs to the guanylate kinase family.

Its subcellular location is the cytoplasm. The catalysed reaction is GMP + ATP = GDP + ADP. Functionally, essential for recycling GMP and indirectly, cGMP. The protein is Guanylate kinase of Yersinia pestis bv. Antiqua (strain Antiqua).